We begin with the raw amino-acid sequence, 429 residues long: Citrate synthase (429 aa).

Catalysis depends on residues histidine 306 and aspartate 364.

Belongs to the citrate synthase family.

It carries out the reaction oxaloacetate + acetyl-CoA + H2O = citrate + CoA + H(+). Its pathway is carbohydrate metabolism; tricarboxylic acid cycle; isocitrate from oxaloacetate: step 1/2. The protein is Citrate synthase (gltA) of Rhizobium meliloti (strain 1021) (Ensifer meliloti).